Reading from the N-terminus, the 311-residue chain is Ribosomal RNA small subunit methyltransferase A (311 aa).

Residues N29, V31, G56, E77, D107, and N126 each coordinate S-adenosyl-L-methionine.

It belongs to the class I-like SAM-binding methyltransferase superfamily. rRNA adenine N(6)-methyltransferase family. RsmA subfamily.

The protein localises to the cytoplasm. The catalysed reaction is adenosine(1518)/adenosine(1519) in 16S rRNA + 4 S-adenosyl-L-methionine = N(6)-dimethyladenosine(1518)/N(6)-dimethyladenosine(1519) in 16S rRNA + 4 S-adenosyl-L-homocysteine + 4 H(+). Specifically dimethylates two adjacent adenosines (A1518 and A1519) in the loop of a conserved hairpin near the 3'-end of 16S rRNA in the 30S particle. May play a critical role in biogenesis of 30S subunits. In Mycolicibacterium vanbaalenii (strain DSM 7251 / JCM 13017 / BCRC 16820 / KCTC 9966 / NRRL B-24157 / PYR-1) (Mycobacterium vanbaalenii), this protein is Ribosomal RNA small subunit methyltransferase A.